Here is a 299-residue protein sequence, read N- to C-terminus: 4-hydroxy-tetrahydrodipicolinate synthase (299 aa).

Thr51 is a pyruvate binding site. Tyr139 functions as the Proton donor/acceptor in the catalytic mechanism. The active-site Schiff-base intermediate with substrate is Lys167. Ile209 lines the pyruvate pocket.

This sequence belongs to the DapA family. As to quaternary structure, homotetramer; dimer of dimers.

The protein resides in the cytoplasm. The enzyme catalyses L-aspartate 4-semialdehyde + pyruvate = (2S,4S)-4-hydroxy-2,3,4,5-tetrahydrodipicolinate + H2O + H(+). It participates in amino-acid biosynthesis; L-lysine biosynthesis via DAP pathway; (S)-tetrahydrodipicolinate from L-aspartate: step 3/4. In terms of biological role, catalyzes the condensation of (S)-aspartate-beta-semialdehyde [(S)-ASA] and pyruvate to 4-hydroxy-tetrahydrodipicolinate (HTPA). The chain is 4-hydroxy-tetrahydrodipicolinate synthase from Methylobacterium radiotolerans (strain ATCC 27329 / DSM 1819 / JCM 2831 / NBRC 15690 / NCIMB 10815 / 0-1).